The primary structure comprises 200 residues: Molybdopterin synthase catalytic subunit (200 aa).

A compositionally biased stretch (polar residues) spans 16–30; the sequence is KLPSSHQSVEDSASE. The disordered stretch occupies residues 16 to 43; it reads KLPSSHQSVEDSASEPSGYEAKDPPQDT. At Ser20 the chain carries Phosphoserine. Residues 154 to 155, Lys170, and 177 to 179 contribute to the substrate site; these read HR and KKE.

The protein belongs to the MoaE family. MOCS2B subfamily. Heterotetramer; composed of 2 small (MOCS2A) and 2 large (MOCS2B) subunits.

Its subcellular location is the cytoplasm. It is found in the cytosol. It carries out the reaction 2 [molybdopterin-synthase sulfur-carrier protein]-C-terminal-Gly-aminoethanethioate + cyclic pyranopterin phosphate + H2O = molybdopterin + 2 [molybdopterin-synthase sulfur-carrier protein]-C-terminal Gly-Gly + 2 H(+). It functions in the pathway cofactor biosynthesis; molybdopterin biosynthesis. In terms of biological role, catalytic subunit of the molybdopterin synthase complex, a complex that catalyzes the conversion of precursor Z into molybdopterin. Acts by mediating the incorporation of 2 sulfur atoms from thiocarboxylated MOCS2A into precursor Z to generate a dithiolene group. The sequence is that of Molybdopterin synthase catalytic subunit from Rattus norvegicus (Rat).